The following is a 235-amino-acid chain: Aspartate/glutamate leucyltransferase (235 aa).

This sequence belongs to the R-transferase family. Bpt subfamily.

Its subcellular location is the cytoplasm. It catalyses the reaction N-terminal L-glutamyl-[protein] + L-leucyl-tRNA(Leu) = N-terminal L-leucyl-L-glutamyl-[protein] + tRNA(Leu) + H(+). The catalysed reaction is N-terminal L-aspartyl-[protein] + L-leucyl-tRNA(Leu) = N-terminal L-leucyl-L-aspartyl-[protein] + tRNA(Leu) + H(+). Functionally, functions in the N-end rule pathway of protein degradation where it conjugates Leu from its aminoacyl-tRNA to the N-termini of proteins containing an N-terminal aspartate or glutamate. This chain is Aspartate/glutamate leucyltransferase, found in Pseudomonas aeruginosa (strain LESB58).